The chain runs to 88 residues: MYLTKEKKEEIFAQHGDAKNTGKAEGQIALFTYRISHLTEHLKKNRHDYNTERSLVLLVGKRRALLDYLKKKDINRYREIIKVLNIRK.

This sequence belongs to the universal ribosomal protein uS15 family. As to quaternary structure, part of the 30S ribosomal subunit. Forms a bridge to the 50S subunit in the 70S ribosome, contacting the 23S rRNA.

In terms of biological role, one of the primary rRNA binding proteins, it binds directly to 16S rRNA where it helps nucleate assembly of the platform of the 30S subunit by binding and bridging several RNA helices of the 16S rRNA. Forms an intersubunit bridge (bridge B4) with the 23S rRNA of the 50S subunit in the ribosome. This is Small ribosomal subunit protein uS15 from Flavobacterium johnsoniae (strain ATCC 17061 / DSM 2064 / JCM 8514 / BCRC 14874 / CCUG 350202 / NBRC 14942 / NCIMB 11054 / UW101) (Cytophaga johnsonae).